Here is a 138-residue protein sequence, read N- to C-terminus: Basic phospholipase A2 homolog Ts-K49b (138 aa).

A signal peptide spans 1–16 (MRTLWIMAVLLVGVEG). 6 cysteine pairs are disulfide-bonded: C42–C131, C44–C60, C65–C138, C66–C104, C73–C97, and C91–C102. Residues 121 to 133 (KKKKINLKLFCKK) are important for membrane-damaging activities in eukaryotes and bacteria; heparin-binding.

As to expression, expressed by the venom gland.

It localises to the secreted. Its function is as follows. Snake venom phospholipase A2 homolog that lacks catalytic activity. It shows myotoxic and weak anticoagulant activities. A model of myotoxic mechanism has been proposed: an apo Lys49-PLA2 is activated by the entrance of a hydrophobic molecule (e.g. fatty acid) at the hydrophobic channel of the protein leading to a reorientation of a monomer. This reorientation causes a transition between 'inactive' to 'active' states, causing alignment of C-terminal and membrane-docking sites (MDoS) side-by-side and putting the membrane-disruption sites (MDiS) in the same plane, exposed to solvent and in a symmetric position for both monomers. The MDoS region stabilizes the toxin on membrane by the interaction of charged residues with phospholipid head groups. Subsequently, the MDiS region destabilizes the membrane with penetration of hydrophobic residues. This insertion causes a disorganization of the membrane, allowing an uncontrolled influx of ions (i.e. calcium and sodium), and eventually triggering irreversible intracellular alterations and cell death. The chain is Basic phospholipase A2 homolog Ts-K49b from Trimeresurus stejnegeri (Chinese green tree viper).